The primary structure comprises 126 residues: UPF0235 protein C15orf40 homolog (126 aa).

Residues 1–33 (MPKKAGATSKGKNQTKEPETPPPPTGPVATDSK) form a disordered region. Serine 89 is subject to Phosphoserine.

It belongs to the UPF0235 family.

The polypeptide is UPF0235 protein C15orf40 homolog (Rattus norvegicus (Rat)).